Here is a 116-residue protein sequence, read N- to C-terminus: Fluoride-specific ion channel FluC 1 (116 aa).

The next 4 helical transmembrane spans lie at 2 to 22, 33 to 53, 63 to 83, and 96 to 116; these read LVLVGLAGAGAAVGALSRYGI, PLPIATLFINLTGALLLGWIL, IFLGTGIMGGYTTFSTMINEL, and WEYFGLSLVGGLVMVYLGTLI. Positions 71 and 74 each coordinate Na(+).

This sequence belongs to the fluoride channel Fluc/FEX (TC 1.A.43) family.

Its subcellular location is the cell membrane. The catalysed reaction is fluoride(in) = fluoride(out). With respect to regulation, na(+) is not transported, but it plays an essential structural role and its presence is essential for fluoride channel function. Its function is as follows. Fluoride-specific ion channel. Important for reducing fluoride concentration in the cell, thus reducing its toxicity. This chain is Fluoride-specific ion channel FluC 1, found in Lactiplantibacillus plantarum (strain ATCC BAA-793 / NCIMB 8826 / WCFS1) (Lactobacillus plantarum).